A 538-amino-acid polypeptide reads, in one-letter code: Zinc finger protein 155 (538 aa).

Residues 8 to 78 form the KRAB domain; it reads VTFKDVAVVF…GTATQREGNS (71 aa). 11 C2H2-type zinc fingers span residues 176–198, 204–226, 232–254, 260–282, 288–310, 316–338, 344–366, 372–394, 400–422, 428–450, and 456–478; these read YTCDECGKSICYISALHVHQRVH, FMCDVCGKEFSQSSHLQTHQRVH, FKCEQCGKGFSRRSALNVHRKLH, YICEACGKAFIHDSQLKEHKRIH, FKCDICGKTFYFRSRLKSHSMVH, FRCDTCDKSFHQRSALNRHCMVH, YRCEQCGKGFIGRLDFYKHQVVH, YNCKECGKSFRWSSCLLNHQRVH, FKCEECGKGFYTNSQLSSHQRSH, YKCEECGKGYVTKFNLDLHQRVH, and YNCKECGKNFSRASSILNHKRLH. A C2H2-type 12; degenerate zinc finger spans residues 484 to 506; sequence FKCEDCGKRLVHRTYRKDQPRDY.

It belongs to the krueppel C2H2-type zinc-finger protein family.

It localises to the nucleus. In terms of biological role, may be involved in transcriptional regulation. This is Zinc finger protein 155 (ZNF155) from Homo sapiens (Human).